Reading from the N-terminus, the 444-residue chain is Ubiquitin carboxyl-terminal hydrolase MINDY-3 (444 aa).

C51 functions as the Nucleophile in the catalytic mechanism. Residue S124 is modified to Phosphoserine. The active-site Proton acceptor is H286.

It belongs to the MINDY deubiquitinase family. FAM188 subfamily. As to quaternary structure, interacts with COPS5.

The protein resides in the nucleus. It carries out the reaction Thiol-dependent hydrolysis of ester, thioester, amide, peptide and isopeptide bonds formed by the C-terminal Gly of ubiquitin (a 76-residue protein attached to proteins as an intracellular targeting signal).. Hydrolase that can remove 'Lys-48'-linked conjugated ubiquitin from proteins. The protein is Ubiquitin carboxyl-terminal hydrolase MINDY-3 of Mus musculus (Mouse).